A 202-amino-acid polypeptide reads, in one-letter code: Ribosomal RNA small subunit methyltransferase G (202 aa).

Residues glycine 75, phenylalanine 80, 125-126 (VQ), and arginine 139 contribute to the S-adenosyl-L-methionine site.

The protein belongs to the methyltransferase superfamily. RNA methyltransferase RsmG family.

The protein localises to the cytoplasm. Functionally, specifically methylates the N7 position of a guanine in 16S rRNA. The protein is Ribosomal RNA small subunit methyltransferase G of Mesomycoplasma hyopneumoniae (strain 7448) (Mycoplasma hyopneumoniae).